The following is a 343-amino-acid chain: NADH-quinone oxidoreductase subunit H (343 aa).

8 helical membrane passes run 5-25 (FIIE…LMAM), 76-96 (FLFV…SAVI), 119-139 (ALLY…IGGW), 158-178 (VSYE…TGTL), 190-210 (MNWN…CAFA), 243-263 (LFAE…LFFG), 284-304 (ILGF…YMWV), and 323-343 (ILIP…LLFK).

The protein belongs to the complex I subunit 1 family. As to quaternary structure, NDH-1 is composed of 14 different subunits. Subunits NuoA, H, J, K, L, M, N constitute the membrane sector of the complex.

Its subcellular location is the cell inner membrane. The catalysed reaction is a quinone + NADH + 5 H(+)(in) = a quinol + NAD(+) + 4 H(+)(out). NDH-1 shuttles electrons from NADH, via FMN and iron-sulfur (Fe-S) centers, to quinones in the respiratory chain. The immediate electron acceptor for the enzyme in this species is believed to be ubiquinone. Couples the redox reaction to proton translocation (for every two electrons transferred, four hydrogen ions are translocated across the cytoplasmic membrane), and thus conserves the redox energy in a proton gradient. This subunit may bind ubiquinone. The chain is NADH-quinone oxidoreductase subunit H from Flavobacterium psychrophilum (strain ATCC 49511 / DSM 21280 / CIP 103535 / JIP02/86).